The sequence spans 870 residues: Linoleate 9S-lipoxygenase 2 (870 aa).

The region spanning 32–158 (NDFGATVIDG…KYRYNRVFFS (127 aa)) is the PLAT domain. One can recognise a Lipoxygenase domain in the interval 161–870 (TSLPSKMPAA…ARGIPNSISI (710 aa)). The disordered stretch occupies residues 203-243 (YNDLGEPDSGNPRPVLGGSPDRPYPRRGRTGRKPTKTDPTA). Basic residues predominate over residues 227–236 (PRRGRTGRKP). Fe cation is bound by residues His-525, His-530, His-716, Asn-720, and Ile-870.

The protein belongs to the lipoxygenase family. In terms of assembly, monomer. The cofactor is Fe cation.

The protein localises to the cytoplasm. It catalyses the reaction (9Z,12Z)-octadecadienoate + O2 = (9S)-hydroperoxy-(10E,12Z)-octadecadienoate. The protein operates within lipid metabolism; oxylipin biosynthesis. Functionally, plant lipoxygenase may be involved in a number of diverse aspects of plant physiology including growth and development, pest resistance, and senescence or responses to wounding. Catalyzes the hydroperoxidation of lipids containing a cis,cis-1,4-pentadiene structure. The sequence is that of Linoleate 9S-lipoxygenase 2 (LOX1.1) from Oryza sativa subsp. japonica (Rice).